The chain runs to 160 residues: Ribosomal RNA large subunit methyltransferase H (160 aa).

Positions 76 and 108 each coordinate S-adenosyl-L-methionine.

Belongs to the RNA methyltransferase RlmH family. Homodimer.

The protein localises to the cytoplasm. The catalysed reaction is pseudouridine(1915) in 23S rRNA + S-adenosyl-L-methionine = N(3)-methylpseudouridine(1915) in 23S rRNA + S-adenosyl-L-homocysteine + H(+). In terms of biological role, specifically methylates the pseudouridine at position 1915 (m3Psi1915) in 23S rRNA. This Bradyrhizobium sp. (strain BTAi1 / ATCC BAA-1182) protein is Ribosomal RNA large subunit methyltransferase H.